The primary structure comprises 220 residues: Fructose-6-phosphate aldolase (220 aa).

The active-site Schiff-base intermediate with substrate is the Lys-85.

The protein belongs to the transaldolase family. Type 3A subfamily. Homodecamer.

The protein resides in the cytoplasm. It catalyses the reaction beta-D-fructose 6-phosphate = dihydroxyacetone + D-glyceraldehyde 3-phosphate. In terms of biological role, catalyzes the reversible formation of fructose 6-phosphate from dihydroxyacetone and D-glyceraldehyde 3-phosphate via an aldolization reaction. The sequence is that of Fructose-6-phosphate aldolase from Salmonella arizonae (strain ATCC BAA-731 / CDC346-86 / RSK2980).